The following is a 430-amino-acid chain: Asparagine--tRNA ligase (430 aa).

It belongs to the class-II aminoacyl-tRNA synthetase family. In terms of assembly, homodimer.

The protein localises to the cytoplasm. It carries out the reaction tRNA(Asn) + L-asparagine + ATP = L-asparaginyl-tRNA(Asn) + AMP + diphosphate + H(+). In Geobacillus thermodenitrificans (strain NG80-2), this protein is Asparagine--tRNA ligase.